A 67-amino-acid chain; its full sequence is Small ribosomal subunit protein bS21 (67 aa).

Belongs to the bacterial ribosomal protein bS21 family.

The polypeptide is Small ribosomal subunit protein bS21 (Granulibacter bethesdensis (strain ATCC BAA-1260 / CGDNIH1)).